Here is a 474-residue protein sequence, read N- to C-terminus: 3-isopropylmalate dehydratase large subunit (474 aa).

[4Fe-4S] cluster-binding residues include Cys355, Cys415, and Cys418.

This sequence belongs to the aconitase/IPM isomerase family. LeuC type 1 subfamily. As to quaternary structure, heterodimer of LeuC and LeuD. [4Fe-4S] cluster serves as cofactor.

The enzyme catalyses (2R,3S)-3-isopropylmalate = (2S)-2-isopropylmalate. Its pathway is amino-acid biosynthesis; L-leucine biosynthesis; L-leucine from 3-methyl-2-oxobutanoate: step 2/4. Catalyzes the isomerization between 2-isopropylmalate and 3-isopropylmalate, via the formation of 2-isopropylmaleate. The polypeptide is 3-isopropylmalate dehydratase large subunit (Shewanella putrefaciens (strain CN-32 / ATCC BAA-453)).